The primary structure comprises 116 residues: Large ribosomal subunit protein bL20 (116 aa).

Belongs to the bacterial ribosomal protein bL20 family.

Binds directly to 23S ribosomal RNA and is necessary for the in vitro assembly process of the 50S ribosomal subunit. It is not involved in the protein synthesizing functions of that subunit. In Acaryochloris marina (strain MBIC 11017), this protein is Large ribosomal subunit protein bL20.